A 209-amino-acid polypeptide reads, in one-letter code: MTRAIVVTATDTDVGKTVFSAGLAGLLDGCYWKPVQAGLADGTDSDTVRRLSGLPDDRILPEAYRLETPASPHHAAAIDNVVIDPALLAPPPCDRRLVIEGAGGLLVPLAGGLLFADIFAGWRFETVVVARTALGTINHSLLTIEALRARDIPILGIAFIGDPQEESERTIAAIGGVRRLGRLPRLDPLDAGTLAAAFAAAFSPEDFAP.

13–18 contacts ATP; sequence DVGKTV. A Mg(2+)-binding site is contributed by T17. K33 is an active-site residue. Residue E100 participates in Mg(2+) binding. ATP contacts are provided by residues 100–103 and 184–186; these read EGAG and PRL.

The protein belongs to the dethiobiotin synthetase family. In terms of assembly, homodimer. It depends on Mg(2+) as a cofactor.

It localises to the cytoplasm. The enzyme catalyses (7R,8S)-7,8-diammoniononanoate + CO2 + ATP = (4R,5S)-dethiobiotin + ADP + phosphate + 3 H(+). It participates in cofactor biosynthesis; biotin biosynthesis; biotin from 7,8-diaminononanoate: step 1/2. Functionally, catalyzes a mechanistically unusual reaction, the ATP-dependent insertion of CO2 between the N7 and N8 nitrogen atoms of 7,8-diaminopelargonic acid (DAPA, also called 7,8-diammoniononanoate) to form a ureido ring. This Rhizorhabdus wittichii (strain DSM 6014 / CCUG 31198 / JCM 15750 / NBRC 105917 / EY 4224 / RW1) (Sphingomonas wittichii) protein is ATP-dependent dethiobiotin synthetase BioD.